The sequence spans 527 residues: Heat shock factor protein HSF8 (527 aa).

A compositionally biased stretch (low complexity) spans 1–13; it reads MEPNSSGSGKAAV. Disordered stretches follow at residues 1–37, 130–160, 243–275, 300–343, and 476–501; these read MEPN…PSAN, RRKP…HSAS, NESN…ADGQ, SPRL…TSGK, and QSPS…QING. Positions 25-37 are enriched in pro residues; that stretch reads QPAPAPAPMPSAN. A DNA-binding region spans residues 39 to 133; it reads PPPFLVKTYD…LLKSISRRKP (95 aa). The span at 136 to 157 shows a compositional bias: low complexity; it reads GHAQQQQQPHGHAQQQMQPPGH. Polar residues-rich tracts occupy residues 319 to 328 and 491 to 501; these read SPQSNASSGR and NTSETKPQING.

It belongs to the HSF family. Homotrimer. In terms of processing, exhibits temperature-dependent phosphorylation.

It localises to the nucleus. Its function is as follows. DNA-binding protein that specifically binds heat shock promoter elements (HSE) and activates transcription. The polypeptide is Heat shock factor protein HSF8 (HSF8) (Solanum peruvianum (Peruvian tomato)).